Here is a 185-residue protein sequence, read N- to C-terminus: Large ribosomal subunit protein uL5 (185 aa).

This sequence belongs to the universal ribosomal protein uL5 family. Part of the 50S ribosomal subunit; part of the 5S rRNA/L5/L18/L25 subcomplex. Contacts the 5S rRNA and the P site tRNA. Forms a bridge to the 30S subunit in the 70S ribosome.

Its function is as follows. This is one of the proteins that bind and probably mediate the attachment of the 5S RNA into the large ribosomal subunit, where it forms part of the central protuberance. In the 70S ribosome it contacts protein S13 of the 30S subunit (bridge B1b), connecting the 2 subunits; this bridge is implicated in subunit movement. Contacts the P site tRNA; the 5S rRNA and some of its associated proteins might help stabilize positioning of ribosome-bound tRNAs. This is Large ribosomal subunit protein uL5 from Bradyrhizobium sp. (strain ORS 278).